The primary structure comprises 1094 residues: Carbamoyl phosphate synthase large chain (1094 aa).

The carboxyphosphate synthetic domain stretch occupies residues 1–402 (MPRRSDLHRI…AFQKALRALE (402 aa)). Positions 129, 169, 175, 176, 208, 210, 215, 241, 242, 243, 285, and 299 each coordinate ATP. An ATP-grasp 1 domain is found at 133 to 328 (GEAMEKIGLR…IARIGAKLAV (196 aa)). The Mg(2+) site is built by Gln285, Glu299, and Asn301. Residues Gln285, Glu299, and Asn301 each contribute to the Mn(2+) site. The interval 403 to 552 (TGRSGWTIAE…YLYGNYDEES (150 aa)) is oligomerization domain. The interval 553–936 (EAATEGRKKV…AFMKSQLAAD (384 aa)) is carbamoyl phosphate synthetic domain. Residues 679 to 870 (EAIARELGIE…LPSVAARLML (192 aa)) form the ATP-grasp 2 domain. 10 residues coordinate ATP: Arg715, Arg754, Leu756, Glu761, Gly786, Ile787, His788, Ser789, Gln829, and Glu841. Residues Gln829, Glu841, and Asn843 each contribute to the Mg(2+) site. The Mn(2+) site is built by Gln829, Glu841, and Asn843. The 141-residue stretch at 937–1077 (NALPREGTVF…QEWHEILRAP (141 aa)) folds into the MGS-like domain. The tract at residues 937–1094 (NALPREGTVF…AGSTQPAGVA (158 aa)) is allosteric domain.

It belongs to the CarB family. As to quaternary structure, composed of two chains; the small (or glutamine) chain promotes the hydrolysis of glutamine to ammonia, which is used by the large (or ammonia) chain to synthesize carbamoyl phosphate. Tetramer of heterodimers (alpha,beta)4. Requires Mg(2+) as cofactor. The cofactor is Mn(2+).

The catalysed reaction is hydrogencarbonate + L-glutamine + 2 ATP + H2O = carbamoyl phosphate + L-glutamate + 2 ADP + phosphate + 2 H(+). It catalyses the reaction hydrogencarbonate + NH4(+) + 2 ATP = carbamoyl phosphate + 2 ADP + phosphate + 2 H(+). It functions in the pathway amino-acid biosynthesis; L-arginine biosynthesis; carbamoyl phosphate from bicarbonate: step 1/1. It participates in pyrimidine metabolism; UMP biosynthesis via de novo pathway; (S)-dihydroorotate from bicarbonate: step 1/3. Its function is as follows. Large subunit of the glutamine-dependent carbamoyl phosphate synthetase (CPSase). CPSase catalyzes the formation of carbamoyl phosphate from the ammonia moiety of glutamine, carbonate, and phosphate donated by ATP, constituting the first step of 2 biosynthetic pathways, one leading to arginine and/or urea and the other to pyrimidine nucleotides. The large subunit (synthetase) binds the substrates ammonia (free or transferred from glutamine from the small subunit), hydrogencarbonate and ATP and carries out an ATP-coupled ligase reaction, activating hydrogencarbonate by forming carboxy phosphate which reacts with ammonia to form carbamoyl phosphate. In Gemmatimonas aurantiaca (strain DSM 14586 / JCM 11422 / NBRC 100505 / T-27), this protein is Carbamoyl phosphate synthase large chain.